We begin with the raw amino-acid sequence, 364 residues long: DNA replication and repair protein RecF (364 aa).

30–37 (GRNAQGKT) is a binding site for ATP.

The protein belongs to the RecF family.

Its subcellular location is the cytoplasm. The RecF protein is involved in DNA metabolism; it is required for DNA replication and normal SOS inducibility. RecF binds preferentially to single-stranded, linear DNA. It also seems to bind ATP. This chain is DNA replication and repair protein RecF, found in Pelotomaculum thermopropionicum (strain DSM 13744 / JCM 10971 / SI).